The primary structure comprises 466 residues: Argininosuccinate lyase (466 aa).

It belongs to the lyase 1 family. Argininosuccinate lyase subfamily.

The protein resides in the cytoplasm. It carries out the reaction 2-(N(omega)-L-arginino)succinate = fumarate + L-arginine. It functions in the pathway amino-acid biosynthesis; L-arginine biosynthesis; L-arginine from L-ornithine and carbamoyl phosphate: step 3/3. The chain is Argininosuccinate lyase from Bartonella tribocorum (strain CIP 105476 / IBS 506).